The chain runs to 86 residues: Small ribosomal subunit protein uS15 (86 aa).

The protein belongs to the universal ribosomal protein uS15 family. Part of the 30S ribosomal subunit. Forms a bridge to the 50S subunit in the 70S ribosome, contacting the 23S rRNA.

Its function is as follows. One of the primary rRNA binding proteins, it binds directly to 16S rRNA where it helps nucleate assembly of the platform of the 30S subunit by binding and bridging several RNA helices of the 16S rRNA. In terms of biological role, forms an intersubunit bridge (bridge B4) with the 23S rRNA of the 50S subunit in the ribosome. This is Small ribosomal subunit protein uS15 from Ruthia magnifica subsp. Calyptogena magnifica.